We begin with the raw amino-acid sequence, 435 residues long: Serine protease snk (435 aa).

A signal peptide spans 1 to 27 (MIILWSLIVHLQLTCLHLILQTPNLEA). Positions 92–138 (FCRRSFDGRSGYCILAYQCLHVIREYRVHGTRIDICTHRNNVPVICC) constitute a Clip domain. Disulfide bonds link cysteine 93/cysteine 137, cysteine 104/cysteine 127, cysteine 110/cysteine 138, cysteine 179/cysteine 303, cysteine 220/cysteine 236, cysteine 346/cysteine 366, and cysteine 377/cysteine 408. The 247-residue stretch at 186 to 432 (IVGGTPTRHG…YLDWIEKIAF (247 aa)) folds into the Peptidase S1 domain. The active-site Charge relay system is histidine 235. Asparagine 255 carries N-linked (GlcNAc...) asparagine glycosylation. Aspartate 283 functions as the Charge relay system in the catalytic mechanism. The active-site Charge relay system is serine 381.

The protein belongs to the peptidase S1 family. CLIP subfamily. As to quaternary structure, interacts (via N-terminal prodomain) with ea/easter (via Peptidase domain); leads to proteolytic activation of ea by snk. This interaction does not require sulfation of a vitelline membrane component by pip but proteolytic cleavage of ea by snk does. Proteolytically activated by gd. May also be cleaved by another protease.

The protein resides in the secreted. In terms of biological role, component of the extracellular signaling pathway that establishes the dorsal-ventral pathway of the embryo. A protease cascade involving ndl, gd, snk and ea results in activation of the spz Toll receptor ligand; acts downstream of ndl and gd. Activation of ea requires both activation of the ndl-gd-snk protease cascade and sulfation of a vitelline membrane component by pip. Localized activation of the Toll receptor in the ventral region of the embryo defines cell identities along the dorsal-ventral continuum. In Drosophila melanogaster (Fruit fly), this protein is Serine protease snk.